The chain runs to 972 residues: Coatomer subunit beta (972 aa).

HEAT repeat units follow at residues 79–113, 133–170, 317–354, 397–434, and 481–518; these read LLYFYWEIVPKLDQDGKLRHEMILVCNAIQHDLQH, ELLEQMVPSTLACLEYRHAYVRKYAILAVLSIYKVSEH, GCLEELTLDILRVLNAEDIDVRSKALTIAMDLVTSRNI, EIAANIVSLLLDFITDLNSVAANGVIAFVKDVVELYPQ, and RQSIGEIPILQTELKNQRKSQDEDDEATEESATKQAGP. The interval 494 to 522 is disordered; sequence LKNQRKSQDEDDEATEESATKQAGPVILP.

In terms of assembly, oligomeric complex that consists of at least the alpha, beta, beta', gamma, delta, epsilon and zeta subunits.

The protein localises to the cytoplasm. It is found in the golgi apparatus membrane. Its subcellular location is the cytoplasmic vesicle. The protein resides in the COPI-coated vesicle membrane. The coatomer is a cytosolic protein complex that binds to dilysine motifs and reversibly associates with Golgi non-clathrin-coated vesicles, which further mediate biosynthetic protein transport from the ER, via the Golgi up to the trans Golgi network. Coatomer complex is required for budding from Golgi membranes, and is essential for the retrograde Golgi-to-ER transport of dilysine-tagged proteins. The polypeptide is Coatomer subunit beta (Candida glabrata (strain ATCC 2001 / BCRC 20586 / JCM 3761 / NBRC 0622 / NRRL Y-65 / CBS 138) (Yeast)).